Consider the following 244-residue polypeptide: Glutathione S-transferase theta-2 (244 aa).

Residues 2 to 82 (GLELYLDLLS…YLSSKYQVAD (81 aa)) enclose the GST N-terminal domain. Glutathione-binding positions include 40-41 (HL), 53-54 (KV), 66-67 (ES), and 104-107 (DNIR). Residues 88–230 (DLQARAQVHE…AKKTLPVPPP (143 aa)) enclose the GST C-terminal domain.

The protein belongs to the GST superfamily. Theta family. Homodimer. As to expression, highest values found in liver followed by testis, adrenal gland, kidney, lung, brain and skeletal muscle. In liver, highest expression found in central vein limiting plate hepatocytes. In lung, expressed mainly in club cells of the bronchiolar epithelium and, at low levels, in type II alveolar cells.

It localises to the cytoplasm. It is found in the cytosol. The protein localises to the nucleus. It catalyses the reaction RX + glutathione = an S-substituted glutathione + a halide anion + H(+). In terms of biological role, catalyzes the inactivation of reactive sulfate esters in carcinogenic arylmethanols. Highest activity towards ethacrynic acid and cumene hydroperoxide. The protein is Glutathione S-transferase theta-2 (Gstt2) of Rattus norvegicus (Rat).